A 180-amino-acid chain; its full sequence is UPF0398 protein EF_1150 (180 aa).

This sequence belongs to the UPF0398 family.

The sequence is that of UPF0398 protein EF_1150 from Enterococcus faecalis (strain ATCC 700802 / V583).